The following is a 323-amino-acid chain: 1-aminocyclopropane-1-carboxylate oxidase 4 (323 aa).

The residue at position 1 (methionine 1) is an N-acetylmethionine. Residues 153 to 254 (PTFGTKVSNY…RMSIASFYNP (102 aa)) enclose the Fe2OG dioxygenase domain. Residues histidine 177, aspartate 179, and histidine 234 each coordinate Fe cation. Arginine 245 contributes to the 2-oxoglutarate binding site.

The protein belongs to the iron/ascorbate-dependent oxidoreductase family. The cofactor is Fe cation. Expressed in vegetative tissues. Expressed constitutively at a low level in leaves and blades.

The catalysed reaction is 1-aminocyclopropane-1-carboxylate + L-ascorbate + O2 = ethene + L-dehydroascorbate + hydrogen cyanide + CO2 + 2 H2O. It participates in alkene biosynthesis; ethylene biosynthesis via S-adenosyl-L-methionine; ethylene from S-adenosyl-L-methionine: step 2/2. Its function is as follows. Enzyme involved in the ethylene biosynthesis. May promote stem elongation by maximizing the extensibility cells, possibly by activating ethylene biosynthesis, in response to very-long-chain fatty acids (VLCFAs C20:0 to C30:0). The sequence is that of 1-aminocyclopropane-1-carboxylate oxidase 4 (ACO4) from Arabidopsis thaliana (Mouse-ear cress).